Reading from the N-terminus, the 219-residue chain is Ribose-5-phosphate isomerase A (219 aa).

Substrate contacts are provided by residues 28–31 (SGST), 81–84 (DGAD), and 94–97 (KGGG). Glu-103 acts as the Proton acceptor in catalysis. Position 121 (Lys-121) interacts with substrate.

Belongs to the ribose 5-phosphate isomerase family. In terms of assembly, homodimer.

It carries out the reaction aldehydo-D-ribose 5-phosphate = D-ribulose 5-phosphate. The protein operates within carbohydrate degradation; pentose phosphate pathway; D-ribose 5-phosphate from D-ribulose 5-phosphate (non-oxidative stage): step 1/1. Its function is as follows. Catalyzes the reversible conversion of ribose-5-phosphate to ribulose 5-phosphate. The sequence is that of Ribose-5-phosphate isomerase A from Actinobacillus succinogenes (strain ATCC 55618 / DSM 22257 / CCUG 43843 / 130Z).